Reading from the N-terminus, the 457-residue chain is MALWGGRFTQAADQRFKQFNDSLRFDYRLAEQDIVGSVAWSKALVTVGVLTADEQRQLEDALNVLLEEVRANPQQILQSDAEDIHSWVEGKLIDKVGQLGKKLHTGRSRNDQVATDLKLWCKETVRELLTANRQLQSALVETAQANQDAVMPGYTHLQRAQPVTFAHWCLAYVEMLARDESRLQDTLKRLDVSPLGCGALAGTAYEIDREQLAGWLGFTSATRNSLDSVSDRDHVLELLSDAAIGMVHLSRFAEDLIFFNSGEAGFVELSDRVTSGSSLMPQKKNPDALELIRGKCGRVQGALTGMMMTLKGLPLAYNKDMQEDKEGVFDALDTWLDCLHMAALVLDGIQVKRSRCQDAAQQGYANATELADYLVAKGVPFREAHHIVGEAVVEAIRQGKPLEALSLADLQKFSLVISEDVYPILSLQSCLDKRAAKGGVSPQQVAQAIDYAKARLA.

Belongs to the lyase 1 family. Argininosuccinate lyase subfamily.

It is found in the cytoplasm. It carries out the reaction 2-(N(omega)-L-arginino)succinate = fumarate + L-arginine. It functions in the pathway amino-acid biosynthesis; L-arginine biosynthesis; L-arginine from L-ornithine and carbamoyl phosphate: step 3/3. This Salmonella arizonae (strain ATCC BAA-731 / CDC346-86 / RSK2980) protein is Argininosuccinate lyase.